Reading from the N-terminus, the 710-residue chain is Polyribonucleotide nucleotidyltransferase (710 aa).

2 residues coordinate Mg(2+): D489 and D495. The 60-residue stretch at 556 to 615 folds into the KH domain; it reads PKIDTIKIDVDKIKVVIGKGGETIDKIIAETGVKIDIDDEGNVSIYSSDQAAIDRTKEII. The S1 motif domain occupies 625–693; it reads GEVYHAKVVR…EKGRVDASMK (69 aa). The disordered stretch occupies residues 691-710; that stretch reads SMKALIPRPPKPEKKEEKHD. Basic and acidic residues predominate over residues 700–710; that stretch reads PKPEKKEEKHD.

The protein belongs to the polyribonucleotide nucleotidyltransferase family. The cofactor is Mg(2+).

The protein resides in the cytoplasm. The enzyme catalyses RNA(n+1) + phosphate = RNA(n) + a ribonucleoside 5'-diphosphate. In terms of biological role, involved in mRNA degradation. Catalyzes the phosphorolysis of single-stranded polyribonucleotides processively in the 3'- to 5'-direction. This Streptococcus pyogenes serotype M49 (strain NZ131) protein is Polyribonucleotide nucleotidyltransferase.